Consider the following 479-residue polypeptide: Protoheme IX farnesyltransferase (479 aa).

Residues 1-207 (MAEQTATTTS…AYIRLTKPRL (207 aa)) are unknown. 4 helical membrane-spanning segments follow: residues 20–40 (LLAG…TTAV), 64–84 (IGWL…CAVV), 98–118 (VLIT…VGAV), and 128–148 (LSVI…IALA). The segment covering 155–164 (TGDPTETQTT) has biased composition (low complexity). Positions 155–186 (TGDPTETQTTPSKPEPDQDLPPASEYDPDLPA) are disordered. 9 helical membrane passes run 207–227 (LMWL…TTTG), 231–251 (PGIA…SGTF), 271–291 (LATD…LTVI), 303–322 (AAIL…TLLL), 324–344 (PNTV…ALIG), 345–365 (WVAV…VIFL), 402–422 (HVIW…TIEA), 423–443 (LGIV…YFAI), and 459–479 (HASN…TLVI). Residues 208–476 (MWLLCLVASA…AVLIAIVFDT (269 aa)) form a protoheme IX prenyltransferase region.

It in the C-terminal section; belongs to the UbiA prenyltransferase family. Protoheme IX farnesyltransferase subfamily.

The protein localises to the cell membrane. It carries out the reaction heme b + (2E,6E)-farnesyl diphosphate + H2O = Fe(II)-heme o + diphosphate. Its pathway is porphyrin-containing compound metabolism; heme O biosynthesis; heme O from protoheme: step 1/1. Converts heme B (protoheme IX) to heme O by substitution of the vinyl group on carbon 2 of heme B porphyrin ring with a hydroxyethyl farnesyl side group. The polypeptide is Protoheme IX farnesyltransferase (ctaB) (Haloquadratum walsbyi (strain DSM 16790 / HBSQ001)).